We begin with the raw amino-acid sequence, 160 residues long: SsrA-binding protein (160 aa).

The protein belongs to the SmpB family.

It localises to the cytoplasm. Required for rescue of stalled ribosomes mediated by trans-translation. Binds to transfer-messenger RNA (tmRNA), required for stable association of tmRNA with ribosomes. tmRNA and SmpB together mimic tRNA shape, replacing the anticodon stem-loop with SmpB. tmRNA is encoded by the ssrA gene; the 2 termini fold to resemble tRNA(Ala) and it encodes a 'tag peptide', a short internal open reading frame. During trans-translation Ala-aminoacylated tmRNA acts like a tRNA, entering the A-site of stalled ribosomes, displacing the stalled mRNA. The ribosome then switches to translate the ORF on the tmRNA; the nascent peptide is terminated with the 'tag peptide' encoded by the tmRNA and targeted for degradation. The ribosome is freed to recommence translation, which seems to be the essential function of trans-translation. The sequence is that of SsrA-binding protein from Proteus mirabilis (strain HI4320).